The following is a 412-amino-acid chain: Potassium channel, subfamily K, member 13 (412 aa).

Residues 1-21 lie on the Cytoplasmic side of the membrane; it reads MACRSGCCCNSIGSFNEDNAR. A helical membrane pass occupies residues 22-42; that stretch reads FLMLALLIIIYLLCGAAVFSA. The pore-forming intramembrane region spans 97–117; the sequence is WDFAGAFYFVGTVVSTIGFGM. K(+) contacts are provided by threonine 112, isoleucine 113, and glycine 114. Residues 112–117 are selectivity filter 1; sequence TIGFGM. Residues 127–147 traverse the membrane as a helical segment; the sequence is IFLIFYGLIGCAATILFFNLF. At 148–198 the chain is on the cytoplasmic side; that stretch reads LERVITVIAFVLKFCHERRESRKAGPTQNCRRPSTDNRDRRTDSLAGWKPS. A helical membrane pass occupies residues 199–219; that stretch reads VYCVMLILGVAAILVSCCASA. An intramembrane region (pore-forming) is located at residues 229-249; that stretch reads YLDALYFCFVAFSTIGFGDMV. Residues threonine 242, isoleucine 243, glycine 244, and phenylalanine 245 each coordinate K(+). The segment at 242 to 247 is selectivity filter 2; it reads TIGFGD. Residues 268 to 288 traverse the membrane as a helical segment; it reads LFILTGVCCIYSLFNVISIVI. Residues 289–412 are Cytoplasmic-facing; the sequence is KQVLNWLLRR…NRLAETSVDR (124 aa). Polar residues predominate over residues 374–386; it reads MANGHPRQSGSSS. Residues 374-395 form a disordered region; it reads MANGHPRQSGSSSRHNEFSGGV.

This sequence belongs to the two pore domain potassium channel (TC 1.A.1.8) family. In terms of assembly, homodimer. Heterodimer. Brain and heart.

It is found in the cell membrane. The enzyme catalyses K(+)(in) = K(+)(out). Its activity is regulated as follows. The channel conductance is activated by arachidonic acid and inhibited by Ba(2+) ions, volatile anesthetics such as halothane and antiarrhythmic drug mexiletine. Insensitive to extracellular pH change. K(+) channel that conducts outward rectifying tonic currents potentiated by purinergic signals. Homo- and heterodimerizes to form functional channels with distinct regulatory and gating properties. Contributes most of K(+) currents at the plasma membrane of resting microglia. Maintains a depolarized membrane potential required for proper ramified microglia morphology and phagocytosis, selectively mediating microglial pruning of presynaptic compartments at hippocampal excitatory synapses. Upon local release of ATP caused by neuronal injury or infection, it is potentiated by purinergic signaling and contributes to ATP-triggered K(+) efflux underlying microglial NLRP3 inflammasome assembly and IL1B release. The chain is Potassium channel, subfamily K, member 13 from Danio rerio (Zebrafish).